The primary structure comprises 1408 residues: TSET complex member tstA (1408 aa).

Disordered stretches follow at residues 259-347 (FWPT…SIIA), 998-1055 (QQSS…AVGS), and 1091-1139 (SSSS…TNLN). The span at 266 to 308 (NNNNNNNNQQINNNNNNNNNNNNNNNNNNNNNNNNNNNNNQNN) shows a compositional bias: low complexity. Polar residues predominate over residues 309–318 (LINGISSMNL). 2 stretches are compositionally biased toward low complexity: residues 319 to 347 (SSIT…SIIA) and 998 to 1051 (QQSS…ISTS).

The protein belongs to the TPLATE family. In terms of assembly, component of the TSET complex, a heterohexamer composed of tstA, tstB, tstC, tstD, tstE and tstF, which may act in plasma membrane turnover. tstA, tstB, tstC and tstD are likely to be the core complex members with tstE and tstF acting as associated scaffold proteins.

The chain is TSET complex member tstA from Dictyostelium discoideum (Social amoeba).